Here is a 465-residue protein sequence, read N- to C-terminus: MRNLSFIVLFLLTLFFIHHLVDASLLVKSLPGFEGPLPFELETGYVSIGESGDVELFYYFVKSERNPENDPLMIWLTGGPGCSSICGLLFANGPLAFKGDEYNGTVPPLELTSFSWTKVANILYLEAPAGSGYSYAKTRRAFESSDTKQMHQIDQFLRSWFVKHPEFISNPFYVGGDSYSGKIVPGAVQQISLGNEKGLTPLINIQGYVLGNPVTDKNIETNYRVPFAHGMGLISDELFESLERSCGGKFFNVDPSNARCSNNLQAYDHCMSEIYSEHILLRNCKVDYVLADTPNIRTDRRRVMKEFSVNDSSSLPPPSCFTYRYFLSAFWANDENVRRALGVKKEVGKWNRCNSQNIPYTFEIFNAVPYHVNNSLKGFRSLIYSGDHDSMVPFSSTQAWIRALNYSIVDDWRPWMMSSNQVAGYTRTYANKMTFATIKGGGHTAEYTPDQCSLMFRRWIDGEPL.

Positions 1 to 23 (MRNLSFIVLFLLTLFFIHHLVDA) are cleaved as a signal peptide. 77–79 (TGG) serves as a coordination point for substrate. 3 disulfides stabilise this stretch: Cys82–Cys353, Cys246–Cys260, and Cys284–Cys320. Asn103 carries N-linked (GlcNAc...) asparagine glycosylation. 177 to 179 (DSY) contributes to the substrate binding site. Ser178 is a catalytic residue. Residues 292 to 317 (DTPNIRTDRRRVMKEFSVNDSSSLPP) constitute a propeptide, linker peptide. N-linked (GlcNAc...) asparagine glycosylation is found at Asn310 and Asn373. Residue Asp389 is part of the active site. An N-linked (GlcNAc...) asparagine glycan is attached at Asn405. 439–443 (KGGGH) is a substrate binding site. Residue His443 is part of the active site.

Belongs to the peptidase S10 family. As to quaternary structure, heterodimer. In terms of processing, N-glycosylated. Expressed in roots and flowers, and at lower levels in young leaves and seedlings. Expressed in mature seeds and detected in expanding siliques.

The protein localises to the secreted. The catalysed reaction is 1-O-(trans-sinapoyl)-beta-D-glucose + choline = O-sinapoylcholine + D-glucose. Slightly inhibited by phenylmethylsulfonyl fluoride (PMSF). In terms of biological role, involved in plants secondary metabolism. Functions as acyltransferase to form the sinapate ester sinapoylcholine also known as sinapine. Able to convert in vitro benzoylglucose into benzoylcholine. This is Serine carboxypeptidase-like 19 from Arabidopsis thaliana (Mouse-ear cress).